A 123-amino-acid polypeptide reads, in one-letter code: Small ribosomal subunit protein uS12 (123 aa).

The residue at position 89 (D89) is a 3-methylthioaspartic acid. Positions 100–123 (GSLDTSGVKDRKQGRSKYGTKRPK) are disordered. Residues 113–123 (GRSKYGTKRPK) show a composition bias toward basic residues.

It belongs to the universal ribosomal protein uS12 family. As to quaternary structure, part of the 30S ribosomal subunit. Contacts proteins S8 and S17. May interact with IF1 in the 30S initiation complex.

In terms of biological role, with S4 and S5 plays an important role in translational accuracy. Interacts with and stabilizes bases of the 16S rRNA that are involved in tRNA selection in the A site and with the mRNA backbone. Located at the interface of the 30S and 50S subunits, it traverses the body of the 30S subunit contacting proteins on the other side and probably holding the rRNA structure together. The combined cluster of proteins S8, S12 and S17 appears to hold together the shoulder and platform of the 30S subunit. This Ectopseudomonas mendocina (strain ymp) (Pseudomonas mendocina) protein is Small ribosomal subunit protein uS12.